The following is a 401-amino-acid chain: CinA-like protein (401 aa).

It belongs to the CinA family.

This chain is CinA-like protein, found in Thermosipho melanesiensis (strain DSM 12029 / CIP 104789 / BI429).